We begin with the raw amino-acid sequence, 405 residues long: L-carnitine CoA-transferase (405 aa).

2 residues coordinate CoA: Lys-97 and Arg-104. Asp-169 functions as the Nucleophile in the catalytic mechanism.

It belongs to the CoA-transferase III family. CaiB subfamily. In terms of assembly, homodimer.

The protein localises to the cytoplasm. The catalysed reaction is crotonobetainyl-CoA + (R)-carnitine = crotonobetaine + (R)-carnitinyl-CoA. It catalyses the reaction 4-(trimethylamino)butanoyl-CoA + (R)-carnitine = (R)-carnitinyl-CoA + 4-(trimethylamino)butanoate. It functions in the pathway amine and polyamine metabolism; carnitine metabolism. Functionally, catalyzes the reversible transfer of the CoA moiety from gamma-butyrobetainyl-CoA to L-carnitine to generate L-carnitinyl-CoA and gamma-butyrobetaine. Is also able to catalyze the reversible transfer of the CoA moiety from gamma-butyrobetainyl-CoA or L-carnitinyl-CoA to crotonobetaine to generate crotonobetainyl-CoA. This is L-carnitine CoA-transferase from Escherichia coli (strain K12 / MC4100 / BW2952).